Reading from the N-terminus, the 362-residue chain is L-asparaginase 2-1 (362 aa).

The signal sequence occupies residues Met1–Arg25. N-linked (GlcNAc...) asparagine glycosylation is present at Asn29. The Asparaginase/glutaminase domain occupies Pro33–Val359. The active-site O-isoaspartyl threonine intermediate is the Thr43. Ser89 contacts substrate. N-linked (GlcNAc...) asparagine glycosylation is present at Asn93. Thr122–Asp123 provides a ligand contact to substrate. N-linked (GlcNAc...) asparagine glycosylation occurs at Asn239.

It belongs to the asparaginase 1 family.

Its subcellular location is the secreted. It localises to the periplasm. The catalysed reaction is L-asparagine + H2O = L-aspartate + NH4(+). The chain is L-asparaginase 2-1 (ASP3-1) from Saccharomyces cerevisiae (strain ATCC 204508 / S288c) (Baker's yeast).